A 900-amino-acid polypeptide reads, in one-letter code: Bifunctional uridylyltransferase/uridylyl-removing enzyme (900 aa).

The uridylyltransferase stretch occupies residues 1-342; that stretch reads MPQVDPELFD…PCEQPVQIQP (342 aa). The tract at residues 343–705 is uridylyl-removing; it reads LNSRFQLRDG…TTQREFESGS (363 aa). Residues 461 to 583 enclose the HD domain; it reads VDAHTLNLIK…VGDQTHLDYL (123 aa). ACT domains lie at 706–789 and 816–891; these read QIFI…IIQR and VLEV…DNGR.

It belongs to the GlnD family. The cofactor is Mg(2+).

It carries out the reaction [protein-PII]-L-tyrosine + UTP = [protein-PII]-uridylyl-L-tyrosine + diphosphate. The catalysed reaction is [protein-PII]-uridylyl-L-tyrosine + H2O = [protein-PII]-L-tyrosine + UMP + H(+). Uridylyltransferase (UTase) activity is inhibited by glutamine, while glutamine activates uridylyl-removing (UR) activity. Modifies, by uridylylation and deuridylylation, the PII regulatory proteins (GlnB and homologs), in response to the nitrogen status of the cell that GlnD senses through the glutamine level. Under low glutamine levels, catalyzes the conversion of the PII proteins and UTP to PII-UMP and PPi, while under higher glutamine levels, GlnD hydrolyzes PII-UMP to PII and UMP (deuridylylation). Thus, controls uridylylation state and activity of the PII proteins, and plays an important role in the regulation of nitrogen assimilation and metabolism. The polypeptide is Bifunctional uridylyltransferase/uridylyl-removing enzyme (Pseudomonas aeruginosa (strain LESB58)).